Consider the following 1153-residue polypeptide: Reverse gyrase 2 (1153 aa).

The RG N-terminal-type zinc finger occupies 1–41; sequence MLKVNYLFGCPNCNGSISVDRLHAGIPCETCLPGAVEKLDI. Residues Cys-10, Cys-13, Cys-28, and Cys-31 each contribute to the Zn(2+) site. ATP contacts are provided by residues Gln-86 and 103–110; that span reads APTGVGKT. Residues 90–276 enclose the Helicase ATP-binding domain; it reads LNKLVRGESF…ALRFLVGFEP (187 aa). The short motif at 184 to 187 is the DEAD box element; sequence DDAD. Residues 567 to 1153 are topoisomerase I; that stretch reads MNFKTALLVV…VNPLQSEQYV (587 aa). One can recognise a Toprim domain in the interval 571-735; the sequence is TALLVVESPT…NIFRISYNEI (165 aa). Mg(2+) is bound at residue Glu-577. Residues 654–681 form an RG C-terminal-type zinc finger; the sequence is LYRCMSCGKTITKKVSTCPYCGSSMINS. Cys-657, Cys-660, Cys-671, and Cys-674 together coordinate Zn(2+). Asp-704 contributes to the Mg(2+) binding site. The Topo IA-type catalytic domain occupies 751–1142; the sequence is NESLVKAQIA…DLLNEIKNIK (392 aa). Catalysis depends on Tyr-894, which acts as the O-(5'-phospho-DNA)-tyrosine intermediate.

The protein in the N-terminal section; belongs to the DEAD box helicase family. DDVD subfamily. It in the C-terminal section; belongs to the type IA topoisomerase family. As to quaternary structure, monomer. The cofactor is Zn(2+). It depends on Mg(2+) as a cofactor.

The protein resides in the cytoplasm. The catalysed reaction is ATP + H2O = ADP + phosphate + H(+). In terms of biological role, modifies the topological state of DNA by introducing positive supercoils in an ATP-dependent process, increasing the linking number in steps of +1. Binds to single-stranded DNA, transiently cleaves and then rejoins the ends, introducing a positive supercoil in the process. The scissile phosphodiester is attacked by the catalytic tyrosine of the enzyme, resulting in the formation of a DNA-(5'-phosphotyrosyl)-enzyme intermediate. Probably involved in rewinding DNA strands in regions of the chromosome that have opened up to allow replication, transcription, DNA repair and/or for DNA protection. Functionally, might be a cell cycle protein. In Sulfolobus acidocaldarius (strain ATCC 33909 / DSM 639 / JCM 8929 / NBRC 15157 / NCIMB 11770), this protein is Reverse gyrase 2.